The sequence spans 248 residues: MKAIDPDLLLRAYSIGVFPMADSRAADDVYWVEPKKRGILPLDHFRLSRSLAKTIRSDRFAVTADRAFGEVVAECAAVTSQRPDTWINPAIEAAYADLHRRGHAHSIECWREGRLVGGLYGVRLGGAFFGESMFSRESNASKVALAWLVARLRAGGFRLLDCQFITDHLQSLGAIEVSRDDYVALLDVALGVVAGAGAAGGVAVAGAAAGWSAPDFFALDGGATDPDTRTVSGPISGCTIVQLLGQTS.

It belongs to the L/F-transferase family.

The protein resides in the cytoplasm. The catalysed reaction is N-terminal L-lysyl-[protein] + L-leucyl-tRNA(Leu) = N-terminal L-leucyl-L-lysyl-[protein] + tRNA(Leu) + H(+). It catalyses the reaction N-terminal L-arginyl-[protein] + L-leucyl-tRNA(Leu) = N-terminal L-leucyl-L-arginyl-[protein] + tRNA(Leu) + H(+). It carries out the reaction L-phenylalanyl-tRNA(Phe) + an N-terminal L-alpha-aminoacyl-[protein] = an N-terminal L-phenylalanyl-L-alpha-aminoacyl-[protein] + tRNA(Phe). Its function is as follows. Functions in the N-end rule pathway of protein degradation where it conjugates Leu, Phe and, less efficiently, Met from aminoacyl-tRNAs to the N-termini of proteins containing an N-terminal arginine or lysine. The chain is Leucyl/phenylalanyl-tRNA--protein transferase from Rhizorhabdus wittichii (strain DSM 6014 / CCUG 31198 / JCM 15750 / NBRC 105917 / EY 4224 / RW1) (Sphingomonas wittichii).